The sequence spans 383 residues: Acetylornithine deacetylase (383 aa).

Residue His80 coordinates Zn(2+). The active site involves Asp82. Position 112 (Asp112) interacts with Zn(2+). Glu144 is a catalytic residue. 3 residues coordinate Zn(2+): Glu145, Glu169, and His355.

Belongs to the peptidase M20A family. ArgE subfamily. Homodimer. The cofactor is Zn(2+). Requires Co(2+) as cofactor. Glutathione is required as a cofactor.

Its subcellular location is the cytoplasm. It carries out the reaction N(2)-acetyl-L-ornithine + H2O = L-ornithine + acetate. The protein operates within amino-acid biosynthesis; L-arginine biosynthesis; L-ornithine from N(2)-acetyl-L-ornithine (linear): step 1/1. In terms of biological role, catalyzes the hydrolysis of the amide bond of N(2)-acetylated L-amino acids. Cleaves the acetyl group from N-acetyl-L-ornithine to form L-ornithine, an intermediate in L-arginine biosynthesis pathway, and a branchpoint in the synthesis of polyamines. The chain is Acetylornithine deacetylase from Escherichia coli O17:K52:H18 (strain UMN026 / ExPEC).